We begin with the raw amino-acid sequence, 159 residues long: Phosphopantetheine adenylyltransferase (159 aa).

Position 10 (threonine 10) interacts with substrate. ATP contacts are provided by residues 10-11 and histidine 18; that span reads TF. Residues lysine 42, methionine 74, and arginine 88 each coordinate substrate. ATP is bound by residues 89-91, glutamate 99, and 124-130; these read GLR and WSFISSS.

This sequence belongs to the bacterial CoaD family. In terms of assembly, homohexamer. Mg(2+) serves as cofactor.

It localises to the cytoplasm. The enzyme catalyses (R)-4'-phosphopantetheine + ATP + H(+) = 3'-dephospho-CoA + diphosphate. The protein operates within cofactor biosynthesis; coenzyme A biosynthesis; CoA from (R)-pantothenate: step 4/5. Reversibly transfers an adenylyl group from ATP to 4'-phosphopantetheine, yielding dephospho-CoA (dPCoA) and pyrophosphate. The polypeptide is Phosphopantetheine adenylyltransferase (Escherichia coli (strain SMS-3-5 / SECEC)).